We begin with the raw amino-acid sequence, 218 residues long: Alkylmercury lyase (218 aa).

It belongs to the MerB family.

The enzyme catalyses an alkylmercury + H(+) = an alkane + Hg(2+). Cleaves the carbon-mercury bond of organomercurials such as phenylmercuric acetate. One product is Hg(2+), which is subsequently detoxified by the mercuric reductase. The protein is Alkylmercury lyase of Clostridium butyricum.